Reading from the N-terminus, the 130-residue chain is Small ribosomal subunit protein uS11c (130 aa).

The protein belongs to the universal ribosomal protein uS11 family. Part of the 30S ribosomal subunit.

The protein resides in the plastid. Its subcellular location is the chloroplast. The chain is Small ribosomal subunit protein uS11c from Angiopteris evecta (Mule's foot fern).